A 380-amino-acid chain; its full sequence is MKPATLEFLRQRFFAYYNGAIPGAGAGYSPESLTEREWGFLFFTENQRSGMRRHISFTSQDELTSYLKSMVPAHVYYSTAYYTHPGAAQMADKEWRGADVIFDLDADHIVRGPYDIMLARVKEELFKLIDMLTGELGFAKRDLRINFSGGRGYHVHLPLLSVRGWDTAERRELVNYVSGTGLSFDSMMAPSQKSGWKLRYHDALNDELARIAGLPCEDALSYLSGLSGISETFAAGFLKNISQTQNLLKSNPEKLLANKVVRAIANAENEPFQAGILSRAAQADEPVTTDVKRLIRHPGSLHGGSGMRVVPISVDQLDAFDPLIDAVVFGERNVSVDCAFNLSMPILGNNYTLTAGRNVVPEALGVFLCCRGIAELSGGI.

Catalysis depends on residues D103, D105, and D284.

The protein belongs to the eukaryotic-type primase small subunit family. In terms of assembly, heterodimer of a small subunit (PriS) and a large subunit (PriL). The cofactor is Mg(2+). Requires Mn(2+) as cofactor.

Functionally, catalytic subunit of DNA primase, an RNA polymerase that catalyzes the synthesis of short RNA molecules used as primers for DNA polymerase during DNA replication. The small subunit contains the primase catalytic core and has DNA synthesis activity on its own. Binding to the large subunit stabilizes and modulates the activity, increasing the rate of DNA synthesis while decreasing the length of the DNA fragments, and conferring RNA synthesis capability. The DNA polymerase activity may enable DNA primase to also catalyze primer extension after primer synthesis. May also play a role in DNA repair. This Methanocorpusculum labreanum (strain ATCC 43576 / DSM 4855 / Z) protein is DNA primase small subunit PriS.